The chain runs to 177 residues: NAD(P)H-quinone oxidoreductase subunit 6, chloroplastic (177 aa).

Transmembrane regions (helical) follow at residues I10–T30, P32–P52, A61–M81, F92–I112, and F152–A172.

The protein belongs to the complex I subunit 6 family. In terms of assembly, NDH is composed of at least 16 different subunits, 5 of which are encoded in the nucleus.

Its subcellular location is the plastid. The protein resides in the chloroplast thylakoid membrane. The enzyme catalyses a plastoquinone + NADH + (n+1) H(+)(in) = a plastoquinol + NAD(+) + n H(+)(out). The catalysed reaction is a plastoquinone + NADPH + (n+1) H(+)(in) = a plastoquinol + NADP(+) + n H(+)(out). Its function is as follows. NDH shuttles electrons from NAD(P)H:plastoquinone, via FMN and iron-sulfur (Fe-S) centers, to quinones in the photosynthetic chain and possibly in a chloroplast respiratory chain. The immediate electron acceptor for the enzyme in this species is believed to be plastoquinone. Couples the redox reaction to proton translocation, and thus conserves the redox energy in a proton gradient. This Nuphar advena (Common spatterdock) protein is NAD(P)H-quinone oxidoreductase subunit 6, chloroplastic (ndhG).